Reading from the N-terminus, the 94-residue chain is Small ribosomal subunit protein uS19 (94 aa).

The protein belongs to the universal ribosomal protein uS19 family.

Functionally, protein S19 forms a complex with S13 that binds strongly to the 16S ribosomal RNA. The polypeptide is Small ribosomal subunit protein uS19 (Clostridium botulinum (strain Hall / ATCC 3502 / NCTC 13319 / Type A)).